We begin with the raw amino-acid sequence, 634 residues long: RNA polymerase sigma factor RpoD (634 aa).

The segment at 177–202 (LHDETPENDEENSSETEGEEHEDNHL) is disordered. The segment covering 182-197 (PENDEENSSETEGEEH) has biased composition (acidic residues). The tract at residues 385–455 (MIEANLRLVI…TRAIADQART (71 aa)) is sigma-70 factor domain-2. The Interaction with polymerase core subunit RpoC motif lies at 409 to 412 (DLIQ). The interval 464–541 (ETINKILRTS…DKNAVAPIDA (78 aa)) is sigma-70 factor domain-3. A sigma-70 factor domain-4 region spans residues 554–607 (VLATLTPREERVLRMRFGIGMNTDHTLEEVGQQFKVTRERIRQIESKALRKLQH). The H-T-H motif DNA-binding region spans 580-599 (LEEVGQQFKVTRERIRQIES). Residues 608-634 (PIRSKKLNSFRSGGKRGDGNSSDLLEA) form a disordered region.

Belongs to the sigma-70 factor family. RpoD/SigA subfamily. In terms of assembly, interacts transiently with the RNA polymerase catalytic core.

The protein resides in the cytoplasm. Functionally, sigma factors are initiation factors that promote the attachment of RNA polymerase to specific initiation sites and are then released. This sigma factor is the primary sigma factor during exponential growth. This chain is RNA polymerase sigma factor RpoD, found in Rickettsia conorii (strain ATCC VR-613 / Malish 7).